Reading from the N-terminus, the 295-residue chain is HTH-type transcriptional regulator ShiR (295 aa).

The HTH lysR-type domain occupies 1-58; sequence MEIRWLEGFIAVAEELHFSNAAIRLGMPQSPLSQLIRRLESELGQKLFDRSTRSVELT. The segment at residues 18 to 37 is a DNA-binding region (H-T-H motif); that stretch reads FSNAAIRLGMPQSPLSQLIR.

Belongs to the LysR transcriptional regulatory family.

Its function is as follows. Activates expression of the shikimate transporter ShiA in the presence of shikimate. Binds to the shiA promoter region. This chain is HTH-type transcriptional regulator ShiR, found in Corynebacterium glutamicum (strain R).